The chain runs to 392 residues: Cell division protein DivIB (392 aa).

The tract at residues 1–88 (MSEKDNNLTP…TQSSEAPIEN (88 aa)) is disordered. Over 1–131 (MSEKDNNLTP…KGSAPLLKKM (131 aa)) the chain is Cytoplasmic. Over residues 14–32 (KHLEYQKRKAEEAKKEKKA) the composition is skewed to basic and acidic residues. Acidic residues predominate over residues 58-76 (TRDEAESAELLEEGFETNN). Residues 132 to 152 (WPALAVVVLVFVGSLYLISPL) traverse the membrane as a helical segment. The 72-residue stretch at 153 to 224 (SKISTFSVSG…NRFEAIVKEH (72 aa)) folds into the POTRA domain. Over 153–392 (SKISTFSVSG…TAQSTTTSSN (240 aa)) the chain is Extracellular. Residues 368–392 (ISAQNAKKTDASSENTAQSTTTSSN) are disordered.

Belongs to the FtsQ/DivIB family. DivIB subfamily.

The protein localises to the cell membrane. Its function is as follows. Cell division protein that may be involved in stabilizing or promoting the assembly of the division complex. The protein is Cell division protein DivIB of Lactococcus lactis subsp. lactis (strain KF147).